The chain runs to 103 residues: Protein reprimo A (103 aa).

The helical transmembrane segment at 50 to 70 (IVQIAVMCVLSLTVVFGIFFL) threads the bilayer.

It belongs to the reprimo family.

The protein localises to the cytoplasm. It localises to the membrane. Its function is as follows. May be involved in the regulation of p53-dependent G2 arrest of the cell cycle. The sequence is that of Protein reprimo A from Danio rerio (Zebrafish).